A 159-amino-acid chain; its full sequence is Lipoprotein LpqH (159 aa).

A signal peptide spans 1-21 (MKRGLTVAVAGAAILVAGLSG). Cys-22 is lipidated: N-palmitoyl cysteine. A lipid anchor (S-diacylglycerol cysteine) is attached at Cys-22. Residues 24-51 (SNKSTTGSGETTTAAGTTASPGAASGPK) are disordered. Positions 27–49 (STTGSGETTTAAGTTASPGAASG) are enriched in low complexity.

It belongs to the mycobacterial 19 kDa antigen family. Post-translationally, modified by Lgt on Cys-22 with an S-linked diacylglycerol with a mixture of C16, C18 and C19 fatty acids, signal peptide is removed by LspA, modifed by Lnt with an amide-linked mixture of C16 and C19 fatty acids.

It localises to the cell membrane. In terms of biological role, might be involved in ligand transport. A host TLR2 agonist, modifies host gene expression in response to pathogen. This chain is Lipoprotein LpqH (lpqH), found in Mycobacterium tuberculosis (strain CDC 1551 / Oshkosh).